The following is a 695-amino-acid chain: uncharacterized protein (695 aa).

Ser113 is modified (phosphoserine). 12 helical membrane-spanning segments follow: residues 237 to 257 (FPLIFTFLLEQIFPMVCSLTV), 265 to 285 (LAAVSLASMTSNITLAIFEGI), 313 to 333 (IAFSLVIYIPFAVMWWYSEPL), 344 to 364 (INLTSRFLRVLILGAPAYIFF), 380 to 400 (GIYVLTICAPLNVLVSYTLVW), 408 to 428 (FIGAAIAVVLNFWLMFFLLLF), 457 to 477 (AFSGIIMLEAEELSYELLTLF), 488 to 508 (AQSAVSTMAALLYMIPFAIGI), 531 to 551 (QVGLSFSFIAGFINCCILVFG), 565 to 585 (VIKLIAQVLPLVGIVQNFDSL), 604 to 624 (IVNLMAYYLFGIPLALILSWF), and 633 to 653 (WIGIGSAMLLIGLVEAYYVLF). Residues 673-688 (EVDSDEYLTDSDDPDE) show a composition bias toward acidic residues. The tract at residues 673–695 (EVDSDEYLTDSDDPDENTALLGA) is disordered.

Belongs to the multi antimicrobial extrusion (MATE) (TC 2.A.66.1) family.

Its subcellular location is the membrane. This is an uncharacterized protein from Saccharomyces cerevisiae (strain ATCC 204508 / S288c) (Baker's yeast).